A 524-amino-acid polypeptide reads, in one-letter code: Metalloendopeptidase OMA1, mitochondrial (524 aa).

The N-terminal 13 residues, 1–13, are a transit peptide targeting the mitochondrion; that stretch reads MSFICGLQSAARN. A propeptide spanning residues 14 to 143 is cleaved from the precursor; the sequence is HVFFRFNSLS…RNFHTSPRFQ (130 aa). At 144–195 the chain is on the mitochondrial matrix side; that stretch reads AAPVPLLLMILKPVQKLFAIIVGRGIRKWWQALPPNKKEVVKENIRKNKWKL. Residues 148-167 are cardiolipin-binding; it reads PLLLMILKPVQKLFAIIVGR. Residues 165–195 form a stress-sensor region region; the sequence is VGRGIRKWWQALPPNKKEVVKENIRKNKWKL. Residues 196 to 216 traverse the membrane as a helical segment; sequence FLGLSSFGLLFVVFYFTHLEV. A Zn(2+)-binding site is contributed by H327. The active site involves E328. H331 and E392 together coordinate Zn(2+). C407 and C465 form a disulfide bridge.

It belongs to the peptidase M48 family. As to quaternary structure, homooligomer. It depends on Zn(2+) as a cofactor. In terms of processing, may form a redox-dependent disulfide bond. Exists in a semi-oxidized state and is activated by prolonged hypoxia. Autocatalytically cleaved in response to mitochondrial depolarization both at the N-terminus and C-terminus to generate the short active form (S-OMA1). Autocatalytic processing at the C-terminus takes place at residues 447-456. The S-OMA1 form is unstable. OMA1 pre-processing by AFG3L2 may participate in maturation before OMA1 autocatalytic cleavage. Degraded by YMEL1 in response to membrane depolarization. Protein turnover is regulated by prohibitin (PHB and PHB2), which promotes degradation of OMA1 in a cardiolipin-binding manner. As to expression, widely expressed, with strong expression in the heart, skeletal muscle, kidney and liver.

It is found in the mitochondrion inner membrane. Protease activity is activated upon autocatalytic cleavage in response to mitochondrial depolarization. In terms of biological role, metalloprotease that is part of the quality control system in the inner membrane of mitochondria. Activated in response to various mitochondrial stress, leading to the proteolytic cleavage of target proteins, such as OPA1, UQCC3 and DELE1. Involved in the fusion of the mitochondrial inner membranes by mediating cleavage of OPA1 at S1 position, generating the soluble OPA1 (S-OPA1), which cooperates with the membrane form (L-OPA1) to coordinate the fusion of mitochondrial inner membranes. Following stress conditions that induce loss of mitochondrial membrane potential, mediates cleavage of OPA1, leading to excess production of soluble OPA1 (S-OPA1) and negative regulation of mitochondrial fusion. Involved in mitochondrial safeguard in response to transient mitochondrial membrane depolarization (flickering) by catalyzing cleavage of OPA1, leading to excess production of S-OPA1, preventing mitochondrial hyperfusion. Also acts as a regulator of apoptosis: upon BAK and BAX aggregation, mediates cleavage of OPA1, leading to the remodeling of mitochondrial cristae and allowing the release of cytochrome c from mitochondrial cristae. In depolarized mitochondria, may also act as a backup protease for PINK1 by mediating PINK1 cleavage and promoting its subsequent degradation by the proteasome. May also cleave UQCC3 in response to mitochondrial depolarization. Also acts as an activator of the integrated stress response (ISR): in response to mitochondrial stress, mediates cleavage of DELE1 to generate the processed form of DELE1 (S-DELE1), which translocates to the cytosol and activates EIF2AK1/HRI to trigger the ISR. Its role in mitochondrial quality control is essential for regulating lipid metabolism as well as to maintain body temperature and energy expenditure under cold-stress conditions. Binds cardiolipin, possibly regulating its protein turnover. Required for the stability of the respiratory supercomplexes. The sequence is that of Metalloendopeptidase OMA1, mitochondrial from Homo sapiens (Human).